Here is a 492-residue protein sequence, read N- to C-terminus: MPTNGLHQVLKIQFGLVNDTDRYLTAESFGFKVNASAPSLKRKQTWVLEPDPGQGTAVLLRSSHLGRYLSAEEDGRVACEAEQPGRDCRFLVLPQPDGRWVLRSEPHGRFFGGTEDQLSCFATAVSPAELWTVHLAIHPQAHLLSVSRRRYVHLCPREDEMAADGDKPWGVDALLTLIFRSRRYCLKSCDSRYLRSDGRLVWEPEPRACYTLEFKAGKLAFKDCDGHYLAPVGPAGTLKAGRNTRPGKDELFDLEESHPQVVLVAANHRYVSVRQGVNVSANQDDELDHETFLMQIDQETKKCTFYSSTGGYWTLVTHGGIHATATQVSANTMFEMEWRGRRVALKASNGRYVCMKKNGQLAAISDFVGKDEEFTLKLINRPILVLRGLDGFVCHHRGSNQLDTNRSVYDVFHLSFSDGAYRIRGRDGGFWYTGSHGSVCSDGERAEDFVFEFRERGRLAIRARSGKYLRGGASGLLRADADAPAGTALWEY.

It belongs to the fascin family. Localized specifically in the outer and inner segments of the photoreceptor cells in the retina.

The protein localises to the cytoplasm. Its subcellular location is the cytoskeleton. It is found in the cell projection. It localises to the stereocilium. Functionally, acts as an actin bundling protein. May play a pivotal role in photoreceptor cell-specific events, such as disk morphogenesis. In Homo sapiens (Human), this protein is Fascin-2 (FSCN2).